The following is a 138-amino-acid chain: Large ribosomal subunit protein uL16 (138 aa).

Residues 1-15 (MLSPKKVKYRKKQRG) are compositionally biased toward basic residues. The tract at residues 1–21 (MLSPKKVKYRKKQRGRLSGEA) is disordered.

Belongs to the universal ribosomal protein uL16 family. Part of the 50S ribosomal subunit.

Functionally, binds 23S rRNA and is also seen to make contacts with the A and possibly P site tRNAs. This chain is Large ribosomal subunit protein uL16, found in Borreliella burgdorferi (strain ATCC 35210 / DSM 4680 / CIP 102532 / B31) (Borrelia burgdorferi).